The chain runs to 178 residues: ATP synthase subunit delta (178 aa).

This sequence belongs to the ATPase delta chain family. F-type ATPases have 2 components, F(1) - the catalytic core - and F(0) - the membrane proton channel. F(1) has five subunits: alpha(3), beta(3), gamma(1), delta(1), epsilon(1). F(0) has three main subunits: a(1), b(2) and c(10-14). The alpha and beta chains form an alternating ring which encloses part of the gamma chain. F(1) is attached to F(0) by a central stalk formed by the gamma and epsilon chains, while a peripheral stalk is formed by the delta and b chains.

The protein localises to the cell inner membrane. In terms of biological role, f(1)F(0) ATP synthase produces ATP from ADP in the presence of a proton or sodium gradient. F-type ATPases consist of two structural domains, F(1) containing the extramembraneous catalytic core and F(0) containing the membrane proton channel, linked together by a central stalk and a peripheral stalk. During catalysis, ATP synthesis in the catalytic domain of F(1) is coupled via a rotary mechanism of the central stalk subunits to proton translocation. Functionally, this protein is part of the stalk that links CF(0) to CF(1). It either transmits conformational changes from CF(0) to CF(1) or is implicated in proton conduction. This is ATP synthase subunit delta from Pseudomonas entomophila (strain L48).